Here is a 593-residue protein sequence, read N- to C-terminus: Methionine--tRNA ligase, mitochondrial (593 aa).

The transit peptide at 1-29 (MLRTSVLRLLGRTGASRLSLLEDFGPRYY) directs the protein to the mitochondrion. The 'HIGH' region signature appears at 52-62 (FYVNAAPHIGH). The 'KMSKS' region motif lies at 347-351 (KMSKS). Residue K350 participates in ATP binding.

This sequence belongs to the class-I aminoacyl-tRNA synthetase family.

It is found in the mitochondrion matrix. The catalysed reaction is tRNA(Met) + L-methionine + ATP = L-methionyl-tRNA(Met) + AMP + diphosphate. The chain is Methionine--tRNA ligase, mitochondrial (MARS2) from Homo sapiens (Human).